The sequence spans 706 residues: Frizzled-6 (706 aa).

The N-terminal stretch at 1 to 18 (MEMFTFLLTCIFLPLLRG) is a signal peptide. Residues 19-132 (HSLFTCEPIT…CDRLQYCDET (114 aa)) enclose the FZ domain. At 19–201 (HSLFTCEPIT…SDELEFAKSF (183 aa)) the chain is on the extracellular side. 5 cysteine pairs are disulfide-bonded: C24-C85, C32-C78, C69-C106, C95-C129, and C99-C123. An N-linked (GlcNAc...) asparagine glycan is attached at N38. The helical transmembrane segment at 202–222 (IGTVSIFCLCATLFTFLTFLI) threads the bilayer. Residues 223–233 (DVRRFRYPERP) are Cytoplasmic-facing. The chain crosses the membrane as a helical span at residues 234-254 (IIYYSVCYSIVSLMYFIGFLL). Residues 255–284 (GDSTACNKADEKLELGDTVVLGSQNKACTV) lie on the Extracellular side of the membrane. Residues 285–305 (LFMLLYFFTMAGTVWWVILTI) traverse the membrane as a helical segment. At 306 to 324 (TWFLAAGRKWSCEAIEQKA) the chain is on the cytoplasmic side. The chain crosses the membrane as a helical span at residues 325-345 (VWFHAVAWGTPGFLTVMLLAM). Residues 346–370 (NKVEGDNISGVCFVGLYDLDASRYF) lie on the Extracellular side of the membrane. N-linked (GlcNAc...) asparagine glycosylation occurs at N352. The helical transmembrane segment at 371–391 (VLLPLCLCVFVGLSLLLAGII) threads the bilayer. Residues 392–416 (SLNHVRQVIQHDGRNQEKLKKFMIR) lie on the Cytoplasmic side of the membrane. A helical transmembrane segment spans residues 417–437 (IGVFSGLYLVPLVTLLGCYVY). The Extracellular segment spans residues 438–473 (EQVNRITWEITWVSDHCRQYHIPCPYQAKAKARPEL). A helical transmembrane segment spans residues 474-494 (ALFMIKYLMTLIVGISAVFWV). Over 495–706 (GSKKTCTEWA…EQGGGCHSDT (212 aa)) the chain is Cytoplasmic. Residues 498 to 503 (KTCTEW) carry the Lys-Thr-X-X-X-Trp motif, mediates interaction with the PDZ domain of Dvl family members motif. The tract at residues 588-706 (EIQTSPETSM…EQGGGCHSDT (119 aa)) is disordered. Residues 646–658 (ARSEGRISPKSDI) show a composition bias toward basic and acidic residues. Phosphoserine is present on S653. Residues 662–672 (GLAQSNNLQVP) are compositionally biased toward polar residues. Positions 673–685 (SSSEPSSLKGSTS) are enriched in low complexity. Residues 694–706 (VRKEQGGGCHSDT) are compositionally biased toward basic and acidic residues.

This sequence belongs to the G-protein coupled receptor Fz/Smo family. As to quaternary structure, interacts with LMBR1L. Ubiquitinated by ZNRF3, leading to its degradation by the proteasome. Detected in adult heart, brain, placenta, lung, liver, skeletal muscle, kidney, pancreas, thymus, prostate, testis, ovary, small intestine and colon. In the fetus, expressed in brain, lung, liver and kidney.

It is found in the membrane. Its subcellular location is the cell membrane. The protein localises to the cell surface. It localises to the apical cell membrane. The protein resides in the cytoplasmic vesicle membrane. It is found in the endoplasmic reticulum membrane. Receptor for Wnt proteins. Most of frizzled receptors are coupled to the beta-catenin canonical signaling pathway, which leads to the activation of disheveled proteins, inhibition of GSK-3 kinase, nuclear accumulation of beta-catenin and activation of Wnt target genes. A second signaling pathway involving PKC and calcium fluxes has been seen for some family members, but it is not yet clear if it represents a distinct pathway or if it can be integrated in the canonical pathway, as PKC seems to be required for Wnt-mediated inactivation of GSK-3 kinase. Both pathways seem to involve interactions with G-proteins. May be involved in transduction and intercellular transmission of polarity information during tissue morphogenesis and/or in differentiated tissues. Together with FZD3, is involved in the neural tube closure and plays a role in the regulation of the establishment of planar cell polarity (PCP), particularly in the orientation of asymmetric bundles of stereocilia on the apical faces of a subset of auditory and vestibular sensory cells located in the inner ear. This chain is Frizzled-6 (FZD6), found in Homo sapiens (Human).